Consider the following 108-residue polypeptide: Phosphoribosyl-AMP cyclohydrolase (108 aa).

Asp72 provides a ligand contact to Mg(2+). Residue Cys73 participates in Zn(2+) binding. The Mg(2+) site is built by Asp74 and Asp76. The Zn(2+) site is built by Cys89 and Cys96.

The protein belongs to the PRA-CH family. Homodimer. Mg(2+) serves as cofactor. Requires Zn(2+) as cofactor.

Its subcellular location is the cytoplasm. The catalysed reaction is 1-(5-phospho-beta-D-ribosyl)-5'-AMP + H2O = 1-(5-phospho-beta-D-ribosyl)-5-[(5-phospho-beta-D-ribosylamino)methylideneamino]imidazole-4-carboxamide. The protein operates within amino-acid biosynthesis; L-histidine biosynthesis; L-histidine from 5-phospho-alpha-D-ribose 1-diphosphate: step 3/9. Its function is as follows. Catalyzes the hydrolysis of the adenine ring of phosphoribosyl-AMP. This is Phosphoribosyl-AMP cyclohydrolase from Archaeoglobus fulgidus (strain ATCC 49558 / DSM 4304 / JCM 9628 / NBRC 100126 / VC-16).